The following is a 68-amino-acid chain: Beta-defensin 1 (68 aa).

A signal peptide spans 1-21 (MRTSYLLLFTLCLLMSEMASG). Residues 22–32 (DNFLTGLGHRS) constitute a propeptide that is removed on maturation. Cystine bridges form between Cys-37–Cys-66, Cys-44–Cys-59, and Cys-49–Cys-67.

The protein belongs to the beta-defensin family. Monomer. Homodimer.

It is found in the secreted. The protein localises to the membrane. Functionally, has bactericidal activity. May act as a ligand for C-C chemokine receptor CCR6. Positively regulates the sperm motility and bactericidal activity in a CCR6-dependent manner. Binds to CCR6 and triggers Ca2+ mobilization in the sperm which is important for its motility. The polypeptide is Beta-defensin 1 (DEFB1) (Presbytis melalophos (Mitred leaf monkey)).